Reading from the N-terminus, the 425-residue chain is Probable mannosyltransferase KTR2 (425 aa).

Residues 1–13 are Cytoplasmic-facing; sequence MQICKVFLTQVKK. The chain crosses the membrane as a helical; Signal-anchor for type II membrane protein span at residues 14–33; it reads LLFVSLLFCLIAQTCWLALV. Residues 34–89 form a stem region region; that stretch reads PYQRQLSLDSYFFRRSREVSSRYDFTRRRHMNQTLKLSSNTYNDEPLNKTKGIKNQ. Residues 34–425 are Lumenal-facing; sequence PYQRQLSLDS…SGKYFLKHDS (392 aa). N-linked (GlcNAc...) asparagine glycosylation is found at Asn65, Asn81, Asn92, and Asn167. Positions 90 to 425 are catalytic; sequence RENATLLMLV…SGKYFLKHDS (336 aa). The Nucleophile role is filled by Glu313.

The protein belongs to the glycosyltransferase 15 family.

It is found in the golgi apparatus membrane. It functions in the pathway protein modification; protein glycosylation. Its function is as follows. Involved in N-linked glycosylation. Transfers an alpha-D-mannosyl residue from GDP-mannose into lipid-linked oligosaccharide, forming an alpha-(1-&gt;2)-D-mannosyl-D-mannose linkage. In Saccharomyces cerevisiae (strain ATCC 204508 / S288c) (Baker's yeast), this protein is Probable mannosyltransferase KTR2 (KTR2).